Reading from the N-terminus, the 613-residue chain is V-type proton ATPase catalytic subunit A isoform 2 (613 aa).

240-247 (GAFGCGKT) is a binding site for ATP.

This sequence belongs to the ATPase alpha/beta chains family. In terms of assembly, V-ATPase is a heteromultimeric enzyme composed of a peripheral catalytic V1 complex (main components: subunits A, B, C, D, E, and F) attached to an integral membrane V0 proton pore complex (main component: the proteolipid protein).

It catalyses the reaction ATP + H2O + 4 H(+)(in) = ADP + phosphate + 5 H(+)(out). In terms of biological role, catalytic subunit of the peripheral V1 complex of vacuolar ATPase. V-ATPase vacuolar ATPase is responsible for acidifying a variety of intracellular compartments in eukaryotic cells. In Acetabularia acetabulum (Mermaid's wine glass), this protein is V-type proton ATPase catalytic subunit A isoform 2.